The chain runs to 396 residues: Obg-like ATPase 1 (396 aa).

The 261-residue stretch at L23 to L283 folds into the OBG-type G domain. N32–T37 contacts ATP. Residues S36 and T56 each contribute to the Mg(2+) site. L231 lines the ATP pocket. The Nuclear export signal signature appears at L267–L274. Position 294 is an N6-acetyllysine (K294). One can recognise a TGS domain in the interval Q304–F387.

It belongs to the TRAFAC class OBG-HflX-like GTPase superfamily. OBG GTPase family. YchF/OLA1 subfamily. Monomer. The cofactor is Mg(2+).

The protein localises to the cytoplasm. The protein resides in the nucleus. Its subcellular location is the nucleolus. In terms of biological role, hydrolyzes ATP, and can also hydrolyze GTP with lower efficiency. Has lower affinity for GTP. This is Obg-like ATPase 1 from Pongo abelii (Sumatran orangutan).